Reading from the N-terminus, the 344-residue chain is L-rhamnose-proton symporter (344 aa).

The next 10 helical transmembrane spans lie at 4 to 24 (AITM…CFYA), 38 to 58 (WSVG…ALLL), 68 to 88 (FNLS…IGNI), 101 to 121 (MGIG…TPII), 131 to 151 (TEGG…VGIV), 175 to 195 (LLLA…MNAA), 214 to 234 (LPSY…FCFI), 259 to 279 (ILLS…YAWG), 290 to 310 (MSWM…GLVL), and 321 to 341 (VAVL…VGLG).

Belongs to the L-rhamnose transporter (TC 2.A.7.6) family.

The protein localises to the cell inner membrane. It carries out the reaction L-rhamnopyranose(in) + H(+)(in) = L-rhamnopyranose(out) + H(+)(out). In terms of biological role, uptake of L-rhamnose across the cytoplasmic membrane with the concomitant transport of protons into the cell (symport system). This is L-rhamnose-proton symporter from Salmonella typhi.